A 79-amino-acid polypeptide reads, in one-letter code: NAD(P)H-quinone oxidoreductase subunit L (79 aa).

The next 2 helical transmembrane spans lie at 10–30 (IIIA…IPAV) and 48–68 (GFMY…SPFL).

This sequence belongs to the complex I NdhL subunit family. NDH-1 can be composed of about 15 different subunits; different subcomplexes with different compositions have been identified which probably have different functions.

The protein localises to the cellular thylakoid membrane. It catalyses the reaction a plastoquinone + NADH + (n+1) H(+)(in) = a plastoquinol + NAD(+) + n H(+)(out). The enzyme catalyses a plastoquinone + NADPH + (n+1) H(+)(in) = a plastoquinol + NADP(+) + n H(+)(out). In terms of biological role, NDH-1 shuttles electrons from an unknown electron donor, via FMN and iron-sulfur (Fe-S) centers, to quinones in the respiratory and/or the photosynthetic chain. The immediate electron acceptor for the enzyme in this species is believed to be plastoquinone. Couples the redox reaction to proton translocation, and thus conserves the redox energy in a proton gradient. Cyanobacterial NDH-1 also plays a role in inorganic carbon-concentration. This chain is NAD(P)H-quinone oxidoreductase subunit L, found in Microcystis aeruginosa (strain NIES-843 / IAM M-2473).